Consider the following 682-residue polypeptide: Glutamine--fructose-6-phosphate aminotransferase [isomerizing] 2 (682 aa).

Cys-2 acts as the For GATase activity in catalysis. The Glutamine amidotransferase type-2 domain maps to 2–288 (CGIFAYMNYR…DDDIAAVADG (287 aa)). At Ser-244 the chain carries Phosphoserine. 2 SIS domains span residues 360-499 (HLKE…DRIS) and 531-672 (LALE…VDFP). Substrate is bound by residues 377 to 378 (TS), 422 to 424 (SQS), Thr-427, and His-578.

It carries out the reaction D-fructose 6-phosphate + L-glutamine = D-glucosamine 6-phosphate + L-glutamate. Its pathway is nucleotide-sugar biosynthesis; UDP-N-acetyl-alpha-D-glucosamine biosynthesis; alpha-D-glucosamine 6-phosphate from D-fructose 6-phosphate: step 1/1. In terms of biological role, controls the flux of glucose into the hexosamine pathway. Most likely involved in regulating the availability of precursors for N- and O-linked glycosylation of proteins. This Mus musculus (Mouse) protein is Glutamine--fructose-6-phosphate aminotransferase [isomerizing] 2 (Gfpt2).